The chain runs to 291 residues: Bifunctional protein FolD (291 aa).

NADP(+)-binding positions include 168–170 (GRG), threonine 195, and valine 236.

This sequence belongs to the tetrahydrofolate dehydrogenase/cyclohydrolase family. As to quaternary structure, homodimer.

It carries out the reaction (6R)-5,10-methylene-5,6,7,8-tetrahydrofolate + NADP(+) = (6R)-5,10-methenyltetrahydrofolate + NADPH. The enzyme catalyses (6R)-5,10-methenyltetrahydrofolate + H2O = (6R)-10-formyltetrahydrofolate + H(+). The protein operates within one-carbon metabolism; tetrahydrofolate interconversion. Functionally, catalyzes the oxidation of 5,10-methylenetetrahydrofolate to 5,10-methenyltetrahydrofolate and then the hydrolysis of 5,10-methenyltetrahydrofolate to 10-formyltetrahydrofolate. In Bifidobacterium adolescentis (strain ATCC 15703 / DSM 20083 / NCTC 11814 / E194a), this protein is Bifunctional protein FolD.